Consider the following 206-residue polypeptide: Protein-methionine-sulfoxide reductase heme-binding subunit MsrQ (206 aa).

5 helical membrane passes run 13–33, 79–99, 116–136, 147–167, and 169–189; these read IAIW…INLG, LLGL…SILE, PYLT…LTST, WQKL…HYLW, and VKTL…LLLL.

This sequence belongs to the MsrQ family. In terms of assembly, heterodimer of a catalytic subunit (MsrP) and a heme-binding subunit (MsrQ). FMN serves as cofactor. Requires heme b as cofactor.

It is found in the cell inner membrane. Functionally, part of the MsrPQ system that repairs oxidized periplasmic proteins containing methionine sulfoxide residues (Met-O), using respiratory chain electrons. Thus protects these proteins from oxidative-stress damage caused by reactive species of oxygen and chlorine generated by the host defense mechanisms. MsrPQ is essential for the maintenance of envelope integrity under bleach stress, rescuing a wide series of structurally unrelated periplasmic proteins from methionine oxidation. MsrQ provides electrons for reduction to the reductase catalytic subunit MsrP, using the quinone pool of the respiratory chain. In Yersinia pestis bv. Antiqua (strain Antiqua), this protein is Protein-methionine-sulfoxide reductase heme-binding subunit MsrQ.